A 333-amino-acid polypeptide reads, in one-letter code: Glycerol-3-phosphate dehydrogenase [NAD(P)+] (333 aa).

Residues W16, R36, and K109 each contribute to the NADPH site. Positions 109, 137, and 139 each coordinate sn-glycerol 3-phosphate. A141 serves as a coordination point for NADPH. Sn-glycerol 3-phosphate-binding residues include K192, D245, S255, R256, and N257. K192 acts as the Proton acceptor in catalysis. R256 contributes to the NADPH binding site. V280 and E282 together coordinate NADPH.

It belongs to the NAD-dependent glycerol-3-phosphate dehydrogenase family.

The protein resides in the cytoplasm. It carries out the reaction sn-glycerol 3-phosphate + NAD(+) = dihydroxyacetone phosphate + NADH + H(+). The catalysed reaction is sn-glycerol 3-phosphate + NADP(+) = dihydroxyacetone phosphate + NADPH + H(+). It functions in the pathway membrane lipid metabolism; glycerophospholipid metabolism. Functionally, catalyzes the reduction of the glycolytic intermediate dihydroxyacetone phosphate (DHAP) to sn-glycerol 3-phosphate (G3P), the key precursor for phospholipid synthesis. The polypeptide is Glycerol-3-phosphate dehydrogenase [NAD(P)+] (Parvibaculum lavamentivorans (strain DS-1 / DSM 13023 / NCIMB 13966)).